Here is a 214-residue protein sequence, read N- to C-terminus: Adenylate kinase (214 aa).

10–15 (GAGKGT) is an ATP binding site. The segment at 30 to 59 (STGDMLRSAVKAGTELGLKAKALMDHGKLV) is NMP. Residues Thr-31, Arg-36, 57 to 59 (KLV), 85 to 88 (GFPR), and Gln-92 each bind AMP. Residues 122–159 (GRRIHAPSGRVYHIKFNPPVVENKDDVTGEELTVRKDD) form an LID region. Residues Arg-123 and 132–133 (VY) each bind ATP. Residues Arg-156 and Arg-167 each coordinate AMP. Arg-200 serves as a coordination point for ATP.

The protein belongs to the adenylate kinase family. In terms of assembly, monomer.

The protein localises to the cytoplasm. It catalyses the reaction AMP + ATP = 2 ADP. Its pathway is purine metabolism; AMP biosynthesis via salvage pathway; AMP from ADP: step 1/1. Functionally, catalyzes the reversible transfer of the terminal phosphate group between ATP and AMP. Plays an important role in cellular energy homeostasis and in adenine nucleotide metabolism. The sequence is that of Adenylate kinase from Photorhabdus laumondii subsp. laumondii (strain DSM 15139 / CIP 105565 / TT01) (Photorhabdus luminescens subsp. laumondii).